The following is a 248-amino-acid chain: mRNA-decapping protein OPG122 (248 aa).

Residues 45–227 (HKRVSVSAIL…IAKYALDTAK (183 aa)) enclose the Nudix hydrolase domain. The short motif at 125 to 147 (GGIPKRGENVPECLSREIKEEVN) is the Nudix box element.

This sequence belongs to the Nudix hydrolase family. Interacts with the late transcription elongation factor VLTF-4/OPG110. Interacts with the late transcription factors VLTF-1. It depends on Mg(2+) as a cofactor. The cofactor is Mn(2+).

It is found in the host mitochondrion. In terms of biological role, acts with RNA polymerase to initiate transcription from late gene promoters. This Cynomys gunnisoni (Gunnison's prairie dog) protein is mRNA-decapping protein OPG122 (OPG122).